Here is a 498-residue protein sequence, read N- to C-terminus: ATP synthase subunit beta, chloroplastic (498 aa).

Residue 172 to 179 (GGAGVGKT) participates in ATP binding.

This sequence belongs to the ATPase alpha/beta chains family. As to quaternary structure, F-type ATPases have 2 components, CF(1) - the catalytic core - and CF(0) - the membrane proton channel. CF(1) has five subunits: alpha(3), beta(3), gamma(1), delta(1), epsilon(1). CF(0) has four main subunits: a(1), b(1), b'(1) and c(9-12).

The protein resides in the plastid. It localises to the chloroplast thylakoid membrane. The catalysed reaction is ATP + H2O + 4 H(+)(in) = ADP + phosphate + 5 H(+)(out). In terms of biological role, produces ATP from ADP in the presence of a proton gradient across the membrane. The catalytic sites are hosted primarily by the beta subunits. In Cinnamomum camphora (Camphor tree), this protein is ATP synthase subunit beta, chloroplastic.